The following is a 191-amino-acid chain: Calcium-activated potassium channel subunit beta-1 (191 aa).

The Cytoplasmic portion of the chain corresponds to 1–18 (MGKKLVMAQKRGETRALC). A helical membrane pass occupies residues 19-39 (LGVAMVVCAAITYYILGTTVL). Topologically, residues 40–155 (PLYQKSVWTQ…VVYQRLYGPQ (116 aa)) are extracellular. 2 N-linked (GlcNAc...) asparagine glycosylation sites follow: Asn-80 and Asn-142. A helical membrane pass occupies residues 156–176 (ILLFSFFWPTFLLTGGLLIIA). Over 177-191 (MVKLNRSLSVLAAQK) the chain is Cytoplasmic.

It belongs to the KCNMB (TC 8.A.14.1) family. KCNMB1 subfamily. In terms of assembly, interacts with KCNMA1 tetramer. There are probably 4 molecules of KCMNB1 per KCNMA1 tetramer. Post-translationally, N-glycosylated. As to expression, weakly expressed. In brain, it is expressed in a few discrete populations of neurons that also express KCNMA1.

The protein resides in the membrane. Its function is as follows. Regulatory subunit of the calcium activated potassium KCNMA1 (maxiK) channel. Modulates the calcium sensitivity and gating kinetics of KCNMA1, thereby contributing to KCNMA1 channel diversity. Increases the apparent Ca(2+)/voltage sensitivity of the KCNMA1 channel. It also modifies KCNMA1 channel kinetics and alters its pharmacological properties. It slows down the activation and the deactivation kinetics of the channel. Acts as a negative regulator of smooth muscle contraction by enhancing the calcium sensitivity to KCNMA1. Its presence is also a requirement for internal binding of the KCNMA1 channel opener dehydrosoyasaponin I (DHS-1) triterpene glycoside and for external binding of the agonist hormone 17-beta-estradiol (E2). Increases the binding activity of charybdotoxin (CTX) toxin to KCNMA1 peptide blocker by increasing the CTX association rate and decreasing the dissociation rate. The protein is Calcium-activated potassium channel subunit beta-1 (Kcnmb1) of Rattus norvegicus (Rat).